A 470-amino-acid polypeptide reads, in one-letter code: PTS system trehalose-specific EIIBC component (470 aa).

Residues methionine 1–threonine 88 enclose the PTS EIIB type-1 domain. Cysteine 27 serves as the catalytic Phosphocysteine intermediate; for EIIB activity. Residue cysteine 27 is modified to Phosphocysteine; by EIIA. In terms of domain architecture, PTS EIIC type-1 spans lysine 108–lysine 470. Transmembrane regions (helical) follow at residues leucine 110–isoleucine 130, isoleucine 160–valine 180, phenylalanine 183–leucine 203, glycine 234–threonine 254, leucine 263–glycine 283, phenylalanine 301–isoleucine 321, histidine 326–tryptophan 346, proline 347–valine 367, phenylalanine 403–leucine 423, and tryptophan 443–alanine 463.

The protein resides in the cell membrane. It catalyses the reaction alpha,alpha-trehalose(out) + N(pros)-phospho-L-histidyl-[protein] = alpha,alpha-trehalose 6-phosphate(in) + L-histidyl-[protein]. Functionally, the phosphoenolpyruvate-dependent sugar phosphotransferase system (sugar PTS), a major carbohydrate active transport system, catalyzes the phosphorylation of incoming sugar substrates concomitantly with their translocation across the cell membrane. This system is involved in trehalose transport. This Bacillus subtilis (strain 168) protein is PTS system trehalose-specific EIIBC component (treP).